We begin with the raw amino-acid sequence, 349 residues long: Secondary metabolism regulator LAE1 (349 aa).

The tract at residues 1 to 46 (MSSRNAPSGCVAPSPATAAPPSPTNLRLTVGQSGSESANEPGGEPE) is disordered. The segment covering 25–38 (NLRLTVGQSGSESA) has biased composition (polar residues).

This sequence belongs to the methyltransferase superfamily. LaeA methyltransferase family. As to quaternary structure, component of the heterotrimeric velvet complex composed of LAE1, VEL1 and VEL2; VEL1 acting as a bridging protein between LAE1 and VEL2.

It localises to the nucleus. The catalysed reaction is L-methionyl-[protein] + S-adenosyl-L-methionine = S-methyl-L-methionyl-[protein] + S-adenosyl-L-homocysteine. In terms of biological role, methyltransferase that performs automethylation. No other methyl-accepting substrate has been identified yet. Component of the velvet transcription factor complex that acts as a global regulator for secondary metabolite gene expression. Controls the expression of the gamma-pentyl-pyrone gene clusters. Required for the expression of cellulase. Regulates asexual sporulation (conidiation) by environmental stimuli such as light and/or mechanical injury. Required for oxidative stress tolerance. Also plays a role in defense and parasitism on other fungi. The chain is Secondary metabolism regulator LAE1 from Hypocrea atroviridis (strain ATCC 20476 / IMI 206040) (Trichoderma atroviride).